Consider the following 109-residue polypeptide: UPF0060 membrane protein PA14_21660 (109 aa).

4 helical membrane passes run 5-25 (LWFVLAAFCEIAGCYAFYLWL), 27-47 (LGKSALWVLPGLLSLTLFALL), 59-79 (AYAAYGGIYVAASLFWLAFVE), and 84-104 (LWSDWLGVALCVVGASVVLFG).

This sequence belongs to the UPF0060 family.

Its subcellular location is the cell inner membrane. The sequence is that of UPF0060 membrane protein PA14_21660 from Pseudomonas aeruginosa (strain UCBPP-PA14).